Consider the following 338-residue polypeptide: Cytochrome P450 monooxygenase easK (338 aa).

The signal sequence occupies residues 1–16; the sequence is MLLLTFTLPVVTLLLA. 2 N-linked (GlcNAc...) asparagine glycosylation sites follow: Asn240 and Asn327.

Belongs to the cytochrome P450 family. Heme serves as cofactor.

Its pathway is alkaloid biosynthesis; ergot alkaloid biosynthesis. Cytochrome P450 monooxygenase; part of the gene cluster that mediates the biosynthesis of fumiclavanine C, a fungal ergot alkaloid. DmaW catalyzes the first step of ergot alkaloid biosynthesis by condensing dimethylallyl diphosphate (DMAP) and tryptophan to form 4-dimethylallyl-L-tryptophan. The second step is catalyzed by the methyltransferase easF that methylates 4-dimethylallyl-L-tryptophan in the presence of S-adenosyl-L-methionine, resulting in the formation of 4-dimethylallyl-L-abrine. The catalase easC and the FAD-dependent oxidoreductase easE then transform 4-dimethylallyl-L-abrine to chanoclavine-I which is further oxidized by EasD in the presence of NAD(+), resulting in the formation of chanoclavine-I aldehyde. EasA reduces chanoclavine-I aldehyde to dihydrochanoclavine-I aldehyde that spontaneously dehydrates to form 6,8-dimethyl-6,7-didehydroergoline. EasG then catalyzes the reduction of 6,8-dimethyl-6,7-didehydroergoline to form festuclavine. Hydrolysis of festuclavine by easM then leads to the formation of fumigaclavine B which is in turn acetylated by easN to fumigaclavine A. Finally, easL catalyzes the conversion of fumigaclavine A into fumigaclavine C by attaching a dimethylallyl moiety to C-2 of the indole nucleus. The role of the cytochrome P450 monooxygenase easK within the cluster has not been identified yet. The protein is Cytochrome P450 monooxygenase easK of Aspergillus fumigatus (strain ATCC MYA-4609 / CBS 101355 / FGSC A1100 / Af293) (Neosartorya fumigata).